The chain runs to 170 residues: Adenine phosphoribosyltransferase (170 aa).

Belongs to the purine/pyrimidine phosphoribosyltransferase family. Homodimer.

It is found in the cytoplasm. It carries out the reaction AMP + diphosphate = 5-phospho-alpha-D-ribose 1-diphosphate + adenine. It functions in the pathway purine metabolism; AMP biosynthesis via salvage pathway; AMP from adenine: step 1/1. Catalyzes a salvage reaction resulting in the formation of AMP, that is energically less costly than de novo synthesis. The polypeptide is Adenine phosphoribosyltransferase (Thermotoga petrophila (strain ATCC BAA-488 / DSM 13995 / JCM 10881 / RKU-1)).